We begin with the raw amino-acid sequence, 400 residues long: Argininosuccinate synthase (400 aa).

8–16 (AYSGGLDTS) serves as a coordination point for ATP. Tyrosine 87 lines the L-citrulline pocket. Glycine 117 provides a ligand contact to ATP. L-aspartate contacts are provided by threonine 119, asparagine 123, and aspartate 124. Position 123 (asparagine 123) interacts with L-citrulline. Positions 127, 175, 260, and 272 each coordinate L-citrulline.

The protein belongs to the argininosuccinate synthase family. Type 1 subfamily. In terms of assembly, homotetramer.

The protein localises to the cytoplasm. The catalysed reaction is L-citrulline + L-aspartate + ATP = 2-(N(omega)-L-arginino)succinate + AMP + diphosphate + H(+). Its pathway is amino-acid biosynthesis; L-arginine biosynthesis; L-arginine from L-ornithine and carbamoyl phosphate: step 2/3. This Mycolicibacterium gilvum (strain PYR-GCK) (Mycobacterium gilvum (strain PYR-GCK)) protein is Argininosuccinate synthase.